The chain runs to 69 residues: Photosystem I reaction center subunit IV (69 aa).

Belongs to the PsaE family.

It localises to the cellular thylakoid membrane. Its function is as follows. Stabilizes the interaction between PsaC and the PSI core, assists the docking of the ferredoxin to PSI and interacts with ferredoxin-NADP oxidoreductase. The sequence is that of Photosystem I reaction center subunit IV from Prochlorococcus marinus (strain MIT 9515).